A 441-amino-acid polypeptide reads, in one-letter code: MFS-type transporter (441 aa).

The tract at residues 1 to 47 (MPPQQEQDTDSDAIRSYNEESKSETPGCIPDAMLSSDETSNDVASDI) is disordered. The next 10 membrane-spanning stretches (helical) occupy residues 61 to 81 (TLCG…FGIF), 95 to 115 (DISW…AFVG), 125 to 145 (LVLS…SLST), 150 to 170 (LILS…TPAV), 183 to 203 (LAIG…NSMA), 212 to 232 (FGWT…FVVV), 259 to 279 (FFTI…YYIA), 289 to 309 (TLTY…GVFG), 323 to 343 (LELL…WIAV), and 351 to 371 (VWTV…PAGI). N-linked (GlcNAc...) asparagine glycosylation occurs at Asn-388. 2 helical membrane-spanning segments follow: residues 389–409 (FTVI…IITA) and 415–435 (YGAQ…IVAA).

It belongs to the major facilitator superfamily. Monocarboxylate porter (TC 2.A.1.13) family.

It is found in the membrane. MFS-type transporter; part of the gene cluster that mediates the biosynthesis of butenolide, a mycotoxin that shows antibiotic activity but does not seem to play a major role in the spread of head blight in wheat. This Gibberella zeae (strain ATCC MYA-4620 / CBS 123657 / FGSC 9075 / NRRL 31084 / PH-1) (Wheat head blight fungus) protein is MFS-type transporter.